The primary structure comprises 150 residues: Catabolic 3-dehydroquinase 2 (150 aa).

Tyrosine 23 acts as the Proton acceptor in catalysis. Substrate contacts are provided by asparagine 74, histidine 80, and aspartate 87. The active-site Proton donor is histidine 100. Substrate contacts are provided by residues 101–102 (IT) and arginine 111.

It belongs to the type-II 3-dehydroquinase family. Homododecamer. Adopts a ring-like structure, composed of an arrangement of two hexameric rings stacked on top of one another.

It carries out the reaction 3-dehydroquinate = 3-dehydroshikimate + H2O. The protein operates within aromatic compound metabolism; 3,4-dihydroxybenzoate biosynthesis; 3,4-dihydroxybenzoate from 3-dehydroquinate: step 1/2. In terms of biological role, is involved in the catabolism of quinate. Allows the utilization of quinate as carbon source via the beta-ketoadipate pathway. In Aspergillus fumigatus (strain ATCC MYA-4609 / CBS 101355 / FGSC A1100 / Af293) (Neosartorya fumigata), this protein is Catabolic 3-dehydroquinase 2.